The following is a 549-amino-acid chain: Urocanate hydratase (549 aa).

NAD(+) contacts are provided by residues 46–47 (GG), Gln-124, Glu-190, Arg-195, 236–237 (NA), 257–261 (QTSAH), 267–268 (YV), and Tyr-316. The active site involves Cys-404. Gly-486 contributes to the NAD(+) binding site.

The protein belongs to the urocanase family. NAD(+) serves as cofactor.

It localises to the cytoplasm. It catalyses the reaction 4-imidazolone-5-propanoate = trans-urocanate + H2O. It participates in amino-acid degradation; L-histidine degradation into L-glutamate; N-formimidoyl-L-glutamate from L-histidine: step 2/3. Catalyzes the conversion of urocanate to 4-imidazolone-5-propionate. The protein is Urocanate hydratase of Thermoanaerobacter pseudethanolicus (strain ATCC 33223 / 39E) (Clostridium thermohydrosulfuricum).